We begin with the raw amino-acid sequence, 440 residues long: Phosphoglucosamine mutase (440 aa).

The Phosphoserine intermediate role is filled by serine 97. Residues serine 97, aspartate 237, aspartate 239, and aspartate 241 each contribute to the Mg(2+) site. Serine 97 is subject to Phosphoserine.

Belongs to the phosphohexose mutase family. Mg(2+) is required as a cofactor. In terms of processing, activated by phosphorylation.

The catalysed reaction is alpha-D-glucosamine 1-phosphate = D-glucosamine 6-phosphate. Catalyzes the conversion of glucosamine-6-phosphate to glucosamine-1-phosphate. This chain is Phosphoglucosamine mutase, found in Nautilia profundicola (strain ATCC BAA-1463 / DSM 18972 / AmH).